Here is a 252-residue protein sequence, read N- to C-terminus: Type I iodothyronine deiodinase (252 aa).

Topologically, residues 1 to 17 (MESLLQTIKLMLRYIQK) are extracellular. The chain crosses the membrane as a helical; Signal-anchor for type III membrane protein span at residues 18–38 (ALILFFLFLYVVVGKVLMFLF). The Cytoplasmic portion of the chain corresponds to 39–252 (PQTMASVLKS…EVCSVLEKKK (214 aa)). Sec130 is a catalytic residue. Position 130 (Sec130) is a non-standard amino acid, selenocysteine.

The protein belongs to the iodothyronine deiodinase family. Predominantly monomer. Can form homodimers but homodimerization is not essential for enzyme activity.

The protein localises to the cell membrane. It is found in the endoplasmic reticulum membrane. It localises to the basolateral cell membrane. It carries out the reaction 3,3',5-triiodo-L-thyronine + iodide + A + H(+) = L-thyroxine + AH2. The enzyme catalyses 3,3',5'-triiodo-L-thyronine + iodide + A + H(+) = L-thyroxine + AH2. It catalyses the reaction 3,3'-diiodo-L-thyronine + iodide + A + H(+) = 3,3',5'-triiodo-L-thyronine + AH2. The catalysed reaction is 3,3'-diiodo-L-thyronine + iodide + A + H(+) = 3,3',5-triiodo-L-thyronine + AH2. It carries out the reaction 3'-iodo-L-thyronine + iodide + A + H(+) = 3',5'-diiodo-L-thyronine + AH2. The enzyme catalyses 3-iodo-L-thyronine + iodide + A + H(+) = 3,5-diiodo-L-thyronine + AH2. It catalyses the reaction 3-iodo-L-thyronine + iodide + A + H(+) = 3,3'-diiodo-L-thyronine + AH2. The catalysed reaction is 3,3'-diiodothyronamine + iodide + A + H(+) = 3,3',5'-triiodothyronamine + AH2. It carries out the reaction 3'-iodothyronamine + iodide + A + H(+) = 3',5'-diiodothyronamine + AH2. The enzyme catalyses 3-iodothyronamine + iodide + A + H(+) = 3,3'-diiodothyronamine + AH2. It catalyses the reaction 3,3'-diiodothyronamine + iodide + A + H(+) = 3,3',5-triiodothyronamine + AH2. The catalysed reaction is 3-iodothyronamine + iodide + A + H(+) = 3,5-diiodothyronamine + AH2. It carries out the reaction 3,3'-diiodo-L-thyronine sulfate + iodide + A + H(+) = 3,3',5'-triiodo-L-thyronine sulfate + AH2. The enzyme catalyses 3,3',5'-triiodo-L-thyronine sulfate + iodide + A + H(+) = L-thyroxine sulfate + AH2. It catalyses the reaction 3,3'-diiodo-L-thyronine sulfate + iodide + A + H(+) = 3,3',5-triiodo-L-thyronine sulfate + AH2. Its activity is regulated as follows. Lacks sensitivity to 6-n-propylthiouracil. In terms of biological role, plays a crucial role in the metabolism of thyroid hormones (TH) and has specific roles in TH activation and inactivation by deiodination. Catalyzes the deiodination of L-thyroxine (T4) to 3,5,3'-triiodothyronine (T3) and 3,3',5'-triiodothyronine (rT3) to 3,3'-diiodothyronine (3,3'-T2) via outer-ring deiodination (ORD). Catalyzes the deiodiantion of T4 to rT3 and T3 to 3,3'-T2 via inner-ring deiodination (IRD). Catalyzes the deiodination of 3',5'-diiodothyronine (3',5'-T2) to 3'-monoiodothyronine (3'-T1) via ORD. Catalyzes the deiodination of 3,5-diiodothyronine (3,5-T2) to 3-monoiodothyronine (3-T1) and 3,3'-T2 to 3-T1 via IRD. Catalyzes the phenolic ring deiodinations of 3,3',5'-triiodothyronamine, 3',5'-diiodothyronamine and 3,3'-diiodothyronamine as well as tyrosyl ring deiodinations of 3,5,3'-triiodothyronamine and 3,5-diiodothyronamine. Catalyzes the deiodination of L-thyroxine sulfate and 3,3',5-triiodo-L-thyronine sulfate via IRD and of 3,3',5'-triiodo-L-thyronine sulfate via ORD. The chain is Type I iodothyronine deiodinase (dio1) from Xenopus laevis (African clawed frog).